The following is an 858-amino-acid chain: Low-density lipoprotein receptor-related protein 12 (858 aa).

Positions 1–32 (MARRWSTKESQRRGSAWLLLFLAGVYGNGALA) are cleaved as a signal peptide. The Extracellular portion of the chain corresponds to 33–492 (ELSENVHISG…ENCPVIVPTR (460 aa)). 9 disulfides stabilise this stretch: C47/C76, C103/C122, C166/C178, C173/C191, C185/C200, C215/C232, C222/C245, C239/C254, and C259/C285. The CUB 1 domain occupies 47–159 (CGESPEQIRA…KGFRLAYFSG (113 aa)). N-linked (GlcNAc...) asparagine glycosylation occurs at N75. LDL-receptor class A domains are found at residues 165–201 (DCAC…EVCA) and 214–255 (PCAY…IDCD). One can recognise a CUB 2 domain in the interval 259–372 (CGQWLKYFYG…RGFNATYQVD (114 aa)). N-linked (GlcNAc...) asparagine glycans are attached at residues N284 and N366. 3 LDL-receptor class A domains span residues 374–411 (FCLP…INCT), 412–449 (MCQK…KNCF), and 450–486 (FCQP…ENCP). 9 disulfides stabilise this stretch: C375–C388, C382–C401, C395–C410, C413–C426, C420–C439, C433–C448, C451–C463, C458–C476, and C470–C485. Residue N409 is glycosylated (N-linked (GlcNAc...) asparagine). N441 carries an N-linked (GlcNAc...) asparagine glycan. The chain crosses the membrane as a helical span at residues 493–513 (VITAAVIGSLICGLLLVIALG). Over 514-858 (CTCKLYSLRM…TSDDEALLLC (345 aa)) the chain is Cytoplasmic. Disordered regions lie at residues 619–721 (ALVS…VSPA) and 746–767 (SSST…SGRE). Low complexity predominate over residues 712–721 (SVEAPSVSPA). Over residues 746–755 (SSSTTQNRSP) the composition is skewed to polar residues.

It belongs to the LDLR family. May interact with RACK1, ZFYVE9 and NMRK2.

It is found in the membrane. Its subcellular location is the coated pit. Probable receptor, which may be involved in the internalization of lipophilic molecules and/or signal transduction. May act as a tumor suppressor. This Mus musculus (Mouse) protein is Low-density lipoprotein receptor-related protein 12 (Lrp12).